A 349-amino-acid chain; its full sequence is Phosphate acyltransferase (349 aa).

The protein belongs to the PlsX family. As to quaternary structure, homodimer. Probably interacts with PlsY.

Its subcellular location is the cytoplasm. The catalysed reaction is a fatty acyl-[ACP] + phosphate = an acyl phosphate + holo-[ACP]. The protein operates within lipid metabolism; phospholipid metabolism. Its function is as follows. Catalyzes the reversible formation of acyl-phosphate (acyl-PO(4)) from acyl-[acyl-carrier-protein] (acyl-ACP). This enzyme utilizes acyl-ACP as fatty acyl donor, but not acyl-CoA. This is Phosphate acyltransferase from Akkermansia muciniphila (strain ATCC BAA-835 / DSM 22959 / JCM 33894 / BCRC 81048 / CCUG 64013 / CIP 107961 / Muc).